The sequence spans 89 residues: Small ribosomal subunit protein uS15 (89 aa).

The segment covering 1 to 11 has biased composition (basic and acidic residues); that stretch reads MSITAERKAEV. Residues 1-24 form a disordered region; the sequence is MSITAERKAEVIKTNAKKAGDTGS.

This sequence belongs to the universal ribosomal protein uS15 family. As to quaternary structure, part of the 30S ribosomal subunit. Forms a bridge to the 50S subunit in the 70S ribosome, contacting the 23S rRNA.

Its function is as follows. One of the primary rRNA binding proteins, it binds directly to 16S rRNA where it helps nucleate assembly of the platform of the 30S subunit by binding and bridging several RNA helices of the 16S rRNA. Functionally, forms an intersubunit bridge (bridge B4) with the 23S rRNA of the 50S subunit in the ribosome. This is Small ribosomal subunit protein uS15 from Afipia carboxidovorans (strain ATCC 49405 / DSM 1227 / KCTC 32145 / OM5) (Oligotropha carboxidovorans).